We begin with the raw amino-acid sequence, 83 residues long: Exodeoxyribonuclease 7 small subunit (83 aa).

The tract at residues 1-25 is disordered; sequence MQDELFETEKAPPKNAKNAPKKSFE.

Belongs to the XseB family. As to quaternary structure, heterooligomer composed of large and small subunits.

The protein localises to the cytoplasm. It catalyses the reaction Exonucleolytic cleavage in either 5'- to 3'- or 3'- to 5'-direction to yield nucleoside 5'-phosphates.. Its function is as follows. Bidirectionally degrades single-stranded DNA into large acid-insoluble oligonucleotides, which are then degraded further into small acid-soluble oligonucleotides. In Helicobacter pylori (strain P12), this protein is Exodeoxyribonuclease 7 small subunit.